Consider the following 253-residue polypeptide: Zinc import ATP-binding protein ZnuC (253 aa).

The region spanning 6–227 (VTLNKISVTF…FGNRGAEQLA (222 aa)) is the ABC transporter domain. An ATP-binding site is contributed by 38-45 (GPNGAGKS).

Belongs to the ABC transporter superfamily. Zinc importer (TC 3.A.1.15.5) family. In terms of assembly, the complex is composed of two ATP-binding proteins (ZnuC), two transmembrane proteins (ZnuB) and a solute-binding protein (ZnuA).

It is found in the cell inner membrane. The catalysed reaction is Zn(2+)(out) + ATP(in) + H2O(in) = Zn(2+)(in) + ADP(in) + phosphate(in) + H(+)(in). Functionally, part of the ABC transporter complex ZnuABC involved in zinc import. Responsible for energy coupling to the transport system. This is Zinc import ATP-binding protein ZnuC from Yersinia pseudotuberculosis serotype I (strain IP32953).